The chain runs to 360 residues: Probable dual-specificity RNA methyltransferase RlmN (360 aa).

The active-site Proton acceptor is Glu-91. The Radical SAM core domain occupies 97-335 (QHYGQSVCVT…CVVRQEHGTD (239 aa)). Cysteines 104 and 340 form a disulfide. Cys-111, Cys-115, and Cys-118 together coordinate [4Fe-4S] cluster. Residues 163–164 (GE), Ser-195, 218–220 (SLH), and Asn-296 each bind S-adenosyl-L-methionine. Residue Cys-340 is the S-methylcysteine intermediate of the active site.

Belongs to the radical SAM superfamily. RlmN family. It depends on [4Fe-4S] cluster as a cofactor.

The protein localises to the cytoplasm. It carries out the reaction adenosine(2503) in 23S rRNA + 2 reduced [2Fe-2S]-[ferredoxin] + 2 S-adenosyl-L-methionine = 2-methyladenosine(2503) in 23S rRNA + 5'-deoxyadenosine + L-methionine + 2 oxidized [2Fe-2S]-[ferredoxin] + S-adenosyl-L-homocysteine. It catalyses the reaction adenosine(37) in tRNA + 2 reduced [2Fe-2S]-[ferredoxin] + 2 S-adenosyl-L-methionine = 2-methyladenosine(37) in tRNA + 5'-deoxyadenosine + L-methionine + 2 oxidized [2Fe-2S]-[ferredoxin] + S-adenosyl-L-homocysteine. Its function is as follows. Specifically methylates position 2 of adenine 2503 in 23S rRNA and position 2 of adenine 37 in tRNAs. The protein is Probable dual-specificity RNA methyltransferase RlmN of Streptococcus equi subsp. zooepidemicus (strain MGCS10565).